A 259-amino-acid polypeptide reads, in one-letter code: Type III pantothenate kinase (259 aa).

Residue 9–16 coordinates ATP; the sequence is DAGNSRIK. Substrate is bound by residues Tyr-93 and 100 to 103; that span reads GSDR. Residue Asp-102 is the Proton acceptor of the active site. ATP is bound at residue Thr-126. Position 190 (Thr-190) interacts with substrate.

Belongs to the type III pantothenate kinase family. As to quaternary structure, homodimer. The cofactor is NH4(+). It depends on K(+) as a cofactor.

The protein resides in the cytoplasm. The enzyme catalyses (R)-pantothenate + ATP = (R)-4'-phosphopantothenate + ADP + H(+). The protein operates within cofactor biosynthesis; coenzyme A biosynthesis; CoA from (R)-pantothenate: step 1/5. Its function is as follows. Catalyzes the phosphorylation of pantothenate (Pan), the first step in CoA biosynthesis. This Burkholderia pseudomallei (strain K96243) protein is Type III pantothenate kinase.